Here is a 230-residue protein sequence, read N- to C-terminus: Ion-translocating oxidoreductase complex subunit E (230 aa).

Transmembrane regions (helical) follow at residues 18-38, 39-59, 63-83, 86-106, 125-145, and 182-202; these read ALVQ…ATNA, LGLG…ISAL, TPAE…VSAV, LINA…PLIV, ALSA…MFVL, and PFLL…MLAV.

Belongs to the NqrDE/RnfAE family. As to quaternary structure, the complex is composed of six subunits: RnfA, RnfB, RnfC, RnfD, RnfE and RnfG.

The protein localises to the cell inner membrane. Functionally, part of a membrane-bound complex that couples electron transfer with translocation of ions across the membrane. The polypeptide is Ion-translocating oxidoreductase complex subunit E (Citrobacter koseri (strain ATCC BAA-895 / CDC 4225-83 / SGSC4696)).